We begin with the raw amino-acid sequence, 132 residues long: Glycine cleavage system H protein (132 aa).

Positions 24–106 constitute a Lipoyl-binding domain; the sequence is TVRVGITDFA…YGAGWLLDVQ (83 aa). N6-lipoyllysine is present on lysine 65.

This sequence belongs to the GcvH family. In terms of assembly, the glycine cleavage system is composed of four proteins: P, T, L and H. (R)-lipoate is required as a cofactor.

Functionally, the glycine cleavage system catalyzes the degradation of glycine. The H protein shuttles the methylamine group of glycine from the P protein to the T protein. The protein is Glycine cleavage system H protein of Mycobacterium avium (strain 104).